The sequence spans 257 residues: Imidazole glycerol phosphate synthase subunit HisF (257 aa).

Active-site residues include D12 and D131.

The protein belongs to the HisA/HisF family. As to quaternary structure, heterodimer of HisH and HisF.

The protein localises to the cytoplasm. The catalysed reaction is 5-[(5-phospho-1-deoxy-D-ribulos-1-ylimino)methylamino]-1-(5-phospho-beta-D-ribosyl)imidazole-4-carboxamide + L-glutamine = D-erythro-1-(imidazol-4-yl)glycerol 3-phosphate + 5-amino-1-(5-phospho-beta-D-ribosyl)imidazole-4-carboxamide + L-glutamate + H(+). It functions in the pathway amino-acid biosynthesis; L-histidine biosynthesis; L-histidine from 5-phospho-alpha-D-ribose 1-diphosphate: step 5/9. In terms of biological role, IGPS catalyzes the conversion of PRFAR and glutamine to IGP, AICAR and glutamate. The HisF subunit catalyzes the cyclization activity that produces IGP and AICAR from PRFAR using the ammonia provided by the HisH subunit. The protein is Imidazole glycerol phosphate synthase subunit HisF of Burkholderia vietnamiensis (strain G4 / LMG 22486) (Burkholderia cepacia (strain R1808)).